The following is a 1719-amino-acid chain: Sodium channel protein type 4 subunit alpha B (1719 aa).

Residues 1 to 126 (MRTLLPPVGS…IVAIKILIHS (126 aa)) lie on the Cytoplasmic side of the membrane. Residues 28 to 50 (QQIREEERKRTNAQVSEELPEPA) are disordered. Residues 108-431 (LLSPFNALRI…VVAMAYAEQN (324 aa)) form an I repeat. The chain crosses the membrane as a helical span at residues 127–145 (LFSLFIMATILTNCAFMTL). Over 146–152 (SDPPAWS) the chain is Extracellular. The helical transmembrane segment at 153–173 (KTMEYVFTFIYTFEATIKILS) threads the bilayer. At 174-187 (RGFCVGKFTFLKDP) the chain is on the cytoplasmic side. A helical transmembrane segment spans residues 188 to 205 (WNWLDFMVISMAYLTELV). At 206-211 (DLGNVS) the chain is on the extracellular side. The N-linked (GlcNAc...) asparagine glycan is linked to Asn-209. A helical membrane pass occupies residues 212 to 228 (VLRTFRVLRALKTITVI). Topologically, residues 229–247 (PGLKTIVGALIQSVRKLAD) are cytoplasmic. Residues 248 to 267 (AMVLTVFCLSVFALIGLQLF) traverse the membrane as a helical segment. Residues 268–368 (MGNLRQKCVL…PNYGYTSYDS (101 aa)) lie on the Extracellular side of the membrane. A disulfide bridge links Cys-275 with Cys-337. Residues Asn-285 and Asn-339 are each glycosylated (N-linked (GlcNAc...) asparagine). Cys-346 and Cys-352 are oxidised to a cystine. An intramembrane region (pore-forming) is located at residues 369 to 393 (FGWAFLALFRLMTQDFWENLFQLTL). Residues 394 to 400 (RTAGKTY) are Extracellular-facing. Residues 401 to 421 (MIFFVVVIFLGSFYLINLILA) traverse the membrane as a helical segment. Over 422 to 513 (VVAMAYAEQN…ECLYAIVMDP (92 aa)) the chain is Cytoplasmic. The II repeat unit spans residues 495–766 (CCGCWRHLKE…QIAINRINRA (272 aa)). A helical transmembrane segment spans residues 514–532 (FVDLGITICIILNTVFMAM). The Extracellular portion of the chain corresponds to 533–543 (EHYPMSADFEE). Residues 544-563 (LLSVGNLVFTGIFTGEMVFK) form a helical membrane-spanning segment. Over 564 to 577 (ILAMDPYFYFQVGW) the chain is Cytoplasmic. The helical transmembrane segment at 578-597 (NIFDSIIVTISLVELGLANV) threads the bilayer. At 598–599 (QG) the chain is on the extracellular side. A helical transmembrane segment spans residues 600-617 (LSVLRSFRLMRVFKLAKS). The Cytoplasmic segment spans residues 618-633 (WPTLNMLIKIIGNSVG). Residues 634 to 652 (ALGNLTLVLAIIVFIFAVV) traverse the membrane as a helical segment. The Extracellular portion of the chain corresponds to 653 to 681 (GMQLFGKNYKDCVCRISEDCVLPRWHMND). A disulfide bridge links Cys-666 with Cys-672. The pore-forming intramembrane region spans 682-702 (FFHAFLIIFRVLCGEWIESMW). Residues 703–713 (DCMEVSGQTMC) are Extracellular-facing. The cysteines at positions 704 and 713 are disulfide-linked. Residues 714–732 (LIVFMMVLVIGNLVVLNLF) form a helical membrane-spanning segment. The Cytoplasmic portion of the chain corresponds to 733–919 (LALLLSSFSG…TCFSIVENNY (187 aa)). Residues 834–845 (SDSDDSDYDEDK) are compositionally biased toward acidic residues. The segment at 834–862 (SDSDDSDYDEDKDSQCDESSVCSSVQKPE) is disordered. One copy of the III repeat lies at 900-1215 (RGKIWCNIRR…KKYYNAMKKL (316 aa)). Residues 920 to 937 (FESFIVFMILLSSGALAF) form a helical membrane-spanning segment. Over 938–950 (EDIYLEKHQLIKS) the chain is Extracellular. Residues 951-969 (ILEYADKVFTYVFVMEMVL) traverse the membrane as a helical segment. The Cytoplasmic segment spans residues 970 to 983 (KWFAYGFKSYFSNA). A helical transmembrane segment spans residues 984–1002 (WCWLDFLIVDVSLVSLTAN). Residues 1003–1010 (ILGYSELG) lie on the Extracellular side of the membrane. Residues 1011 to 1029 (AIKSLRTLRALRPLRALSR) traverse the membrane as a helical segment. The Cytoplasmic segment spans residues 1030–1046 (FEGMRVVVNALVGAVPS). A helical transmembrane segment spans residues 1047-1066 (IFNVLLVCLIFWLIFSIMGV). The Extracellular portion of the chain corresponds to 1067-1119 (NLFAGKFSYCFNETSQEIIDTKVVDNKTECIALIKANFTEVRWKNVKVNYDNV). A disulfide bridge links Cys-1076 with Cys-1096. N-linked (GlcNAc...) asparagine glycans are attached at residues Asn-1078 and Asn-1092. An intramembrane region (pore-forming) is located at residues 1120 to 1141 (GIGYLSLLQVATFKGWTDIMYA). At 1142–1158 (AVDSRDVESQPIYEVNL) the chain is on the extracellular side. The chain crosses the membrane as a helical span at residues 1159–1180 (YMYLYFVIFIIFGSFFTLNLFI). At 1181–1243 (GVIIDNFNQQ…LVFDLVTKQI (63 aa)) the chain is on the cytoplasmic side. The important for rapid channel inactivation stretch occupies residues 1199–1201 (IFM). The stretch at 1224–1521 (VPRPENPFQG…WEKFDPDASQ (298 aa)) is one IV repeat. Residues 1244-1261 (FDVFIMVLICLNMVTMMV) traverse the membrane as a helical segment. Residues 1262-1272 (ETDEQSDKKEE) lie on the Extracellular side of the membrane. The chain crosses the membrane as a helical span at residues 1273-1291 (VLYWINVVFILIFTTECTL). At 1292–1303 (KIIALRRHYFSI) the chain is on the cytoplasmic side. Residues 1304–1321 (GWNIFDFVVVILSILGLL) form a helical membrane-spanning segment. At 1322 to 1334 (LADIIEKYFVSPT) the chain is on the extracellular side. A helical membrane pass occupies residues 1335 to 1351 (LFRVIRLARIGRVLRLI). Topologically, residues 1352–1370 (RGAKGIRTLLFALMMSLPA) are cytoplasmic. A helical transmembrane segment spans residues 1371–1388 (LFNIGLLLFLIMFIFSIF). The Extracellular portion of the chain corresponds to 1389 to 1410 (GMSNFAYVKKEALIDDMFNFET). Residues 1411–1433 (FGNSMICLFMITTSAGWDGLLSP) constitute an intramembrane region (pore-forming). Residues 1434–1462 (IMNTPPDCDPNVENPGTTVRGNCGSPAIG) are Extracellular-facing. Cys-1441 and Cys-1456 form a disulfide bridge. Residues 1463–1485 (IAFFSTYIIMSFLVVVNMFIAII) form a helical membrane-spanning segment. Topologically, residues 1486 to 1719 (LENFNVATEE…QERDQRETSV (234 aa)) are cytoplasmic. The region spanning 1615 to 1644 (EEVAATVIQRAYRKYLLLRTVRLASFMYRE) is the IQ domain.

Belongs to the sodium channel (TC 1.A.1.10) family. Nav1.4/SCN4A subfamily. Voltage-gated sodium (Nav) channels consist of an ion-conducting alpha subunit which is functional on its own associated with regulatory beta subunits.

The protein localises to the cell membrane. It carries out the reaction Na(+)(in) = Na(+)(out). In terms of biological role, pore-forming subunit of a voltage-gated sodium (Nav) channel that directly mediates the depolarizing phase of action potentials in excitable membranes. Navs, also called VGSCs (voltage-gated sodium channels) or VDSCs (voltage-dependent sodium channels), operate by switching between closed and open conformations depending on the voltage difference across the membrane. In the open conformation they allow Na(+) ions to selectively pass through the pore, along their electrochemical gradient. The influx of Na+ ions provokes membrane depolarization, initiating the propagation of electrical signals throughout cells and tissues. The chain is Sodium channel protein type 4 subunit alpha B (scn4ab) from Takifugu rubripes (Japanese pufferfish).